Consider the following 127-residue polypeptide: Major sperm protein 33 (127 aa).

Ala-2 carries the post-translational modification N-acetylalanine. In terms of domain architecture, MSP spans Asp-9 to Asn-126.

In terms of tissue distribution, sperm.

Its subcellular location is the cell projection. The protein resides in the pseudopodium. It localises to the cytoplasm. The protein localises to the cytoskeleton. Functionally, central component in molecular interactions underlying sperm crawling. Forms an extensive filament system that extends from sperm villipoda, along the leading edge of the pseudopod. This chain is Major sperm protein 33 (msp-33), found in Caenorhabditis elegans.